The chain runs to 340 residues: Sideroflexin-5 (340 aa).

4 consecutive transmembrane segments (helical) span residues 103-123 (IFMP…VVGL), 163-183 (FIQG…GLNV), 254-274 (LTRV…MSML), and 287-307 (LLPV…PLAI).

It belongs to the sideroflexin family. Primarily expressed in the brain.

The protein resides in the mitochondrion inner membrane. The catalysed reaction is citrate(in) = citrate(out). Mitochondrial amino-acid transporter. Transports citrate. Does not act as a serine transporter: not able to mediate transport of serine into mitochondria. In brown adipose tissue, plays a role in the regulation of UCP1-dependent thermogenesis probably by supporting mitochondrial glycerol-3-phosphate utilization. The chain is Sideroflexin-5 from Homo sapiens (Human).